The primary structure comprises 431 residues: Lipid storage droplets surface-binding protein 1 (431 aa).

The segment at 397-431 is disordered; it reads KVTGSDGGNSNHRSSRRRQDPNHYSATHNNINGVY. Over residues 418–431 the composition is skewed to polar residues; it reads NHYSATHNNINGVY.

This sequence belongs to the perilipin family.

It localises to the cytoplasm. The protein resides in the lipid droplet. Required for normal deposition of neutral lipids in the oocyte. The polypeptide is Lipid storage droplets surface-binding protein 1 (Drosophila melanogaster (Fruit fly)).